The following is a 249-amino-acid chain: 3-deoxy-D-manno-octulosonic acid kinase (249 aa).

Residue D175 is part of the active site.

The protein belongs to the protein kinase superfamily. KdkA/RfaP family.

It is found in the cell inner membrane. The enzyme catalyses an alpha-Kdo-(2-&gt;6)-lipid IVA + ATP = a 4-O-phospho-alpha-Kdo-(2-&gt;6)-lipid IVA + ADP + H(+). Its pathway is bacterial outer membrane biogenesis; LPS core biosynthesis. In terms of biological role, catalyzes the ATP-dependent phosphorylation of the 3-deoxy-D-manno-octulosonic acid (Kdo) residue in Kdo-lipid IV(A) at the 4-OH position. This Xylella fastidiosa (strain M23) protein is 3-deoxy-D-manno-octulosonic acid kinase.